A 387-amino-acid chain; its full sequence is N6-succino-2-amino-2'-deoxyadenylate synthase (387 aa).

Catalysis depends on S14, which acts as the Proton acceptor. S14, T15, G16, K17, and G18 together coordinate ATP. Residue S14 coordinates dGMP. S14 contributes to the Mg(2+) binding site. N40 contacts dGMP. Residues G42, H43, and T44 each contribute to the ATP site. Position 42 (G42) interacts with Mg(2+). Residues S125, T126, and R140 each coordinate dGMP. Q207 is an ATP binding site. T222 provides a ligand contact to dGMP. T293 serves as a coordination point for Mg(2+). L-aspartate contacts are provided by T293, V294, and R299. ATP contacts are provided by N324 and N327.

It belongs to the Caudovirales PurZ family. It depends on Mg(2+) as a cofactor.

The enzyme catalyses dGMP + L-aspartate + ATP = (2S)-2-amino-2'-deoxyadenylo-succinate + ADP + phosphate + 2 H(+). It functions in the pathway purine metabolism. In terms of biological role, involved in the synthesis of the atypical nucleotide dZTP (2-amino-2'-deoxyadenosine-5'-triphosphate). Catalyzes the condensation of aspartate with deoxyguanylate into dSMP (N6-succino-2-amino-2'-deoxyadenylate), which undergoes defumarylation and phosphorylation respectively by host PurB and guanylate/nucleoside diphosphate kinases to give dZTP. dZTP is integrated into the viral genome instead of adenine by the viral DNA polymerase. This Z-base probably completely replaces adenosine and forms a triple bond to the opposite T-base. The resulting non-standard viral DNA is called Z-genome. The chemically modified DNA is probably harder for the host bacteria to digest with nucleases or restriction enzymes. The polypeptide is N6-succino-2-amino-2'-deoxyadenylate synthase (Acinetobacter phage SH-Ab 15497).